Here is a 333-residue protein sequence, read N- to C-terminus: tRNA uridine(34) hydroxylase (333 aa).

The 95-residue stretch at serine 123–serine 217 folds into the Rhodanese domain. Catalysis depends on cysteine 177, which acts as the Cysteine persulfide intermediate.

The protein belongs to the TrhO family.

The enzyme catalyses uridine(34) in tRNA + AH2 + O2 = 5-hydroxyuridine(34) in tRNA + A + H2O. Functionally, catalyzes oxygen-dependent 5-hydroxyuridine (ho5U) modification at position 34 in tRNAs. In Shewanella sp. (strain MR-7), this protein is tRNA uridine(34) hydroxylase.